The sequence spans 371 residues: Glutamate 5-kinase (371 aa).

Residue lysine 11 participates in ATP binding. Residues serine 52, aspartate 139, and asparagine 151 each contribute to the substrate site. Residues 171 to 172 (TD) and 213 to 219 (TGGMATK) contribute to the ATP site. The PUA domain maps to 278-356 (EGSLTLDEGA…AEIPRILGYE (79 aa)).

The protein belongs to the glutamate 5-kinase family.

It is found in the cytoplasm. It catalyses the reaction L-glutamate + ATP = L-glutamyl 5-phosphate + ADP. It functions in the pathway amino-acid biosynthesis; L-proline biosynthesis; L-glutamate 5-semialdehyde from L-glutamate: step 1/2. Its function is as follows. Catalyzes the transfer of a phosphate group to glutamate to form L-glutamate 5-phosphate. The polypeptide is Glutamate 5-kinase (Synechococcus sp. (strain JA-2-3B'a(2-13)) (Cyanobacteria bacterium Yellowstone B-Prime)).